Here is a 304-residue protein sequence, read N- to C-terminus: Methionyl-tRNA formyltransferase (304 aa).

Residue Ser110–Pro113 coordinates (6S)-5,6,7,8-tetrahydrofolate.

It belongs to the Fmt family.

It catalyses the reaction L-methionyl-tRNA(fMet) + (6R)-10-formyltetrahydrofolate = N-formyl-L-methionyl-tRNA(fMet) + (6S)-5,6,7,8-tetrahydrofolate + H(+). In terms of biological role, attaches a formyl group to the free amino group of methionyl-tRNA(fMet). The formyl group appears to play a dual role in the initiator identity of N-formylmethionyl-tRNA by promoting its recognition by IF2 and preventing the misappropriation of this tRNA by the elongation apparatus. This is Methionyl-tRNA formyltransferase from Gluconobacter oxydans (strain 621H) (Gluconobacter suboxydans).